A 280-amino-acid polypeptide reads, in one-letter code: Tryptophan 2,3-dioxygenase (280 aa).

Substrate is bound by residues 47 to 51 (FVVQH), Tyr-109, and Arg-113. His-236 lines the heme pocket. Thr-250 is a binding site for substrate.

Belongs to the tryptophan 2,3-dioxygenase family. In terms of assembly, homotetramer. It depends on heme as a cofactor.

The catalysed reaction is L-tryptophan + O2 = N-formyl-L-kynurenine. The protein operates within amino-acid degradation; L-tryptophan degradation via kynurenine pathway; L-kynurenine from L-tryptophan: step 1/2. Its function is as follows. Heme-dependent dioxygenase that catalyzes the oxidative cleavage of the L-tryptophan (L-Trp) pyrrole ring and converts L-tryptophan to N-formyl-L-kynurenine. Catalyzes the oxidative cleavage of the indole moiety. The sequence is that of Tryptophan 2,3-dioxygenase from Serratia proteamaculans (strain 568).